A 279-amino-acid chain; its full sequence is Probable endonuclease 4 (279 aa).

Zn(2+) is bound by residues H66, H106, E142, D176, H179, H213, D226, H228, and E258.

This sequence belongs to the AP endonuclease 2 family. The cofactor is Zn(2+).

It carries out the reaction Endonucleolytic cleavage to 5'-phosphooligonucleotide end-products.. Its function is as follows. Endonuclease IV plays a role in DNA repair. It cleaves phosphodiester bonds at apurinic or apyrimidinic (AP) sites, generating a 3'-hydroxyl group and a 5'-terminal sugar phosphate. This Photobacterium profundum (strain SS9) protein is Probable endonuclease 4.